A 354-amino-acid chain; its full sequence is Glyceraldehyde-3-phosphate dehydrogenase (354 aa).

NAD(+)-binding positions include 11–12 and glycine 108; that span reads TI. 137–139 is a binding site for D-glyceraldehyde 3-phosphate; sequence SCN. Cysteine 138 acts as the Nucleophile in catalysis. NAD(+) is bound at residue arginine 166. 192–193 contributes to the D-glyceraldehyde 3-phosphate binding site; the sequence is HG. Glutamine 299 is an NAD(+) binding site.

It belongs to the glyceraldehyde-3-phosphate dehydrogenase family. In terms of assembly, homotetramer.

It is found in the cytoplasm. It carries out the reaction D-glyceraldehyde 3-phosphate + phosphate + NADP(+) = (2R)-3-phospho-glyceroyl phosphate + NADPH + H(+). It catalyses the reaction D-glyceraldehyde 3-phosphate + phosphate + NAD(+) = (2R)-3-phospho-glyceroyl phosphate + NADH + H(+). It participates in carbohydrate degradation; glycolysis; pyruvate from D-glyceraldehyde 3-phosphate: step 1/5. In Haloarcula marismortui (strain ATCC 43049 / DSM 3752 / JCM 8966 / VKM B-1809) (Halobacterium marismortui), this protein is Glyceraldehyde-3-phosphate dehydrogenase.